The primary structure comprises 858 residues: Leucine--tRNA ligase (858 aa).

The 'HIGH' region motif lies at 42–52 (PYPSGRLHMGH). The 'KMSKS' region signature appears at 618–622 (KMSKS). Position 621 (Lys-621) interacts with ATP.

Belongs to the class-I aminoacyl-tRNA synthetase family.

The protein resides in the cytoplasm. The catalysed reaction is tRNA(Leu) + L-leucine + ATP = L-leucyl-tRNA(Leu) + AMP + diphosphate. The chain is Leucine--tRNA ligase from Vibrio cholerae serotype O1 (strain ATCC 39541 / Classical Ogawa 395 / O395).